The chain runs to 276 residues: Omega-amidase NIT2 (276 aa).

In terms of domain architecture, CN hydrolase spans Phe4–Leu248. The residue at position 26 (Ser26) is a Phosphoserine. Catalysis depends on Glu43, which acts as the Proton acceptor. Residue Lys68 is modified to N6-acetyllysine; alternate. Position 68 is an N6-succinyllysine; alternate (Lys68). Catalysis depends on Lys112, which acts as the Proton donor. N6-succinyllysine is present on residues Lys123 and Lys130. The Nucleophile role is filled by Cys153.

Homodimer. As to expression, detected in fetal brain (at protein level). Ubiquitous. Detected in heart, brain, placenta, lung, liver, skeletal muscle, kidney, pancreas, prostate, spleen, thymus, prostate, testis, ovary, small intestine and colon.

It is found in the cytoplasm. It catalyses the reaction a monoamide of a dicarboxylate + H2O = a dicarboxylate + NH4(+). The catalysed reaction is 2-oxoglutaramate + H2O = 2-oxoglutarate + NH4(+). It carries out the reaction 2-oxosuccinamate + H2O = oxaloacetate + NH4(+). Has omega-amidase activity. The role of omega-amidase is to remove potentially toxic intermediates by converting 2-oxoglutaramate and 2-oxosuccinamate to biologically useful 2-oxoglutarate and oxaloacetate, respectively. The chain is Omega-amidase NIT2 (NIT2) from Homo sapiens (Human).